Consider the following 174-residue polypeptide: Co-chaperone protein HscB homolog (174 aa).

One can recognise a J domain in the interval asparagine 2–leucine 74.

This sequence belongs to the HscB family. Interacts with HscA and stimulates its ATPase activity.

Its function is as follows. Co-chaperone involved in the maturation of iron-sulfur cluster-containing proteins. Seems to help targeting proteins to be folded toward HscA. The protein is Co-chaperone protein HscB homolog of Shewanella sp. (strain ANA-3).